A 121-amino-acid chain; its full sequence is Small ribosomal subunit protein uS13 (121 aa).

A disordered region spans residues 98 to 121; it reads RGQKTRNNAHTVKGKPKSIAGKKK. Positions 109-121 are enriched in basic residues; that stretch reads VKGKPKSIAGKKK.

It belongs to the universal ribosomal protein uS13 family. Part of the 30S ribosomal subunit. Forms a loose heterodimer with protein S19. Forms two bridges to the 50S subunit in the 70S ribosome.

Functionally, located at the top of the head of the 30S subunit, it contacts several helices of the 16S rRNA. In the 70S ribosome it contacts the 23S rRNA (bridge B1a) and protein L5 of the 50S subunit (bridge B1b), connecting the 2 subunits; these bridges are implicated in subunit movement. Contacts the tRNAs in the A and P-sites. This is Small ribosomal subunit protein uS13 from Phytoplasma australiense.